The primary structure comprises 266 residues: MSEIHSIMITNRQGKTLSVQINGPENAPAIVFSNSLGTDHGMWQPQVAALKSQYRVVTYDTRGHGQSDVIENTTLQNLGEDVLDILDALNIEKAHFCGISMGGLTALWLGIYQAARFYSITVANSAAKIWTEDGWNARAEAVEANGLADLVASTHTRWFSDKFDYKNDNLAQKTIQSLADTPAQGYANACRALAKADVREKLASISIPTLIIAGSADPVTTITDGEFMQQHIQCNQFEVIDASHLSNIEQPEKFIQIFSGFVKSIQ.

In terms of domain architecture, AB hydrolase-1 spans 28-250 (PAIVFSNSLG…DASHLSNIEQ (223 aa)).

The enzyme catalyses (4,5-dihydro-5-oxofuran-2-yl)-acetate + H2O = 3-oxoadipate + H(+). Its pathway is aromatic compound metabolism; beta-ketoadipate pathway; 3-oxoadipate from 5-oxo-4,5-dihydro-2-furylacetate: step 1/1. The polypeptide is 3-oxoadipate enol-lactonase 1 (pcaD) (Acinetobacter baylyi (strain ATCC 33305 / BD413 / ADP1)).